The following is a 599-amino-acid chain: Peptidyl-Asp metalloendopeptidase (599 aa).

Residues 1 to 20 (MKKSLLCSTLALAVASAAQA) form the signal peptide. His164 is a Zn(2+) binding site. Glu165 is an active-site residue. His168 and His174 together coordinate Zn(2+). The interval 265 to 285 (PTKVPGTVNPGSGGDTPTPPD) is disordered. Positions 458-583 (YDFESGIGGW…KRAELMILSG (126 aa)) constitute a CBM-cenC domain.

Belongs to the peptidase M72 family. Interacts with BamI, the product of its coregulated adjacent gene, which inhibits its protease activity. Zn(2+) is required as a cofactor. Made as a membrane-associated pre-pro-protein, which is exported to the periplasm with removal of the signal peptide, leading to a protein with a molecular mass of 65 kDa, that likely contains the metzincin domain plus tandem carbohydrate-binding domains. Undergoes processing during export to the extracellular milieu, probably by autocatalysis, yielding a (mature length) 25 kDa protein that most likely corresponds to the metzincin domain only.

It localises to the secreted. It catalyses the reaction Cleavage of Xaa-|-Asp, Xaa-|-Glu and Xaa-|-cysteic acid bonds.. With respect to regulation, is inhibited by BamI, the product of its coregulated adjacent gene. Metalloprotease with endopeptidase activity. Specifically cleaves on the N-terminal side of aspartyl, glutamyl and cysteic acid residues. Mep72 appears to be a secreted biofilm-specific regulator that affects the processing of a very specific subset of virulence factors exported by the type III secretion machinery as well as flagellar proteins. Binds directly to ExoS and PcrV and affects the processing of these proteins in the biofilm secretome, but contrary to expectation, Mep72 seems to protect these targets against proteolytic processing/degradation. In Pseudomonas aeruginosa (strain ATCC 15692 / DSM 22644 / CIP 104116 / JCM 14847 / LMG 12228 / 1C / PRS 101 / PAO1), this protein is Peptidyl-Asp metalloendopeptidase.